Here is a 154-residue protein sequence, read N- to C-terminus: Transcriptional repressor NrdR (154 aa).

A zinc finger spans residues 3-34 (CPFCGNDETKVLESRQVEEGTAVRRRRECERC). The 91-residue stretch at 49–139 (LIVVKKDGRR…VYREFKDVQR (91 aa)) folds into the ATP-cone domain.

Belongs to the NrdR family. It depends on Zn(2+) as a cofactor.

Functionally, negatively regulates transcription of bacterial ribonucleotide reductase nrd genes and operons by binding to NrdR-boxes. In Desulfitobacterium hafniense (strain DSM 10664 / DCB-2), this protein is Transcriptional repressor NrdR.